The primary structure comprises 570 residues: MRYSQYFIPTVKETPSDAEVVSHKLMLRAGMIRKLAAGIYNYLPLGLRSIRKVEQIVREEMNRAGAIELLMPSVQPAELWQESKRWEQYGKELLRFKDRKDAEFCLGPTHEEVITDLVRREVKSYRQLPLNLYQVQSKFRDEIRPRFGLMRGREFIMKDAYSFDVSSEAADTSYDKMYQAYRRIFQRCGLKFRAVEADTGSIGGSSSHEFMVLADSGEDAIVSCTACEYAANVEKAEARLFPSEHAEPRELEKVETPQKRSVEEVTTFLGIPASSLVKTLLCVADGEPVAALVRGDHDLNEIKLKHLLGCEELEMASEEIVERVTGAPVGFAGPVGLKIKIVADLTIQGMKNFVTGGNARDLHFKNVNIGRDFTPALIADIRNVVHGDPCPRCEAGHLEMWRGIEVGHVFKLGTKYSESLRATFLDADGKEQVIFMGCYGIGISRTVAACIEQNHDADGIIFPIPIAPFHCIISAVSTKDAEVVAACDELYRALTAVGVEVLFDDRDERPGSKFKDADLIGIPLRIVVGSKNLAEGKVELKSRKGGEVSLLPLAEAVETVKGLVVAALNQ.

The protein belongs to the class-II aminoacyl-tRNA synthetase family. ProS type 1 subfamily. In terms of assembly, homodimer.

It localises to the cytoplasm. The enzyme catalyses tRNA(Pro) + L-proline + ATP = L-prolyl-tRNA(Pro) + AMP + diphosphate. Its function is as follows. Catalyzes the attachment of proline to tRNA(Pro) in a two-step reaction: proline is first activated by ATP to form Pro-AMP and then transferred to the acceptor end of tRNA(Pro). As ProRS can inadvertently accommodate and process non-cognate amino acids such as alanine and cysteine, to avoid such errors it has two additional distinct editing activities against alanine. One activity is designated as 'pretransfer' editing and involves the tRNA(Pro)-independent hydrolysis of activated Ala-AMP. The other activity is designated 'posttransfer' editing and involves deacylation of mischarged Ala-tRNA(Pro). The misacylated Cys-tRNA(Pro) is not edited by ProRS. This is Proline--tRNA ligase from Geobacter metallireducens (strain ATCC 53774 / DSM 7210 / GS-15).